We begin with the raw amino-acid sequence, 303 residues long: Putative S-adenosyl-L-methionine-dependent methyltransferase MAP_4197c (303 aa).

Residues Asp-129 and Asp-158 to Leu-159 each bind S-adenosyl-L-methionine.

It belongs to the UPF0677 family.

Functionally, exhibits S-adenosyl-L-methionine-dependent methyltransferase activity. This Mycolicibacterium paratuberculosis (strain ATCC BAA-968 / K-10) (Mycobacterium paratuberculosis) protein is Putative S-adenosyl-L-methionine-dependent methyltransferase MAP_4197c.